The primary structure comprises 597 residues: Histidine protein kinase DivJ (597 aa).

The next 6 membrane-spanning stretches (helical) occupy residues 40-57, 62-81, 91-109, 110-125, 137-158, and 159-188; these read LGWLAAVCLAAAAALFTA, WPVWAALGAGALPALVSLIF, WLLVLWAVGGSLAAVLTGG, VGGAMAAWCLAPVAAA, GAALALIGACVAALTQLSGLAP, and AAPTGPLAFVLGFLALVTTGLGLAAGLLIG. In terms of domain architecture, Histidine kinase spans 335–553; sequence NMSHELRTPL…TVSVRLPVLL (219 aa). The residue at position 338 (histidine 338) is a Phosphohistidine; by autocatalysis. The segment covering 561–585 has biased composition (pro residues); the sequence is PTPPAAPEAPSAPEPAPTVEEPPPA. The tract at residues 561–597 is disordered; sequence PTPPAAPEAPSAPEPAPTVEEPPPASLGDNVIAFAPR.

It is found in the cell membrane. It carries out the reaction ATP + protein L-histidine = ADP + protein N-phospho-L-histidine.. Functionally, kinase required for the regulation of cell division and differentiation. Is part of a signal transduction pathway, activating PleD by phosphorylation. The polypeptide is Histidine protein kinase DivJ (divJ) (Caulobacter vibrioides (strain ATCC 19089 / CIP 103742 / CB 15) (Caulobacter crescentus)).